The following is a 409-amino-acid chain: Arginine deiminase (409 aa).

Catalysis depends on Cys-399, which acts as the Amidino-cysteine intermediate.

This sequence belongs to the arginine deiminase family.

Its subcellular location is the cytoplasm. It carries out the reaction L-arginine + H2O = L-citrulline + NH4(+). Its pathway is amino-acid degradation; L-arginine degradation via ADI pathway; carbamoyl phosphate from L-arginine: step 1/2. In Streptococcus sanguinis (strain SK36), this protein is Arginine deiminase.